Consider the following 303-residue polypeptide: Archaeosortase A (303 aa).

7 consecutive transmembrane segments (helical) span residues 3 to 23, 36 to 56, 60 to 80, 93 to 113, 169 to 189, 200 to 220, and 259 to 279; these read GLLS…GAVA, TAAW…FTLV, YIEG…GWLL, AVAA…FTLL, VVLA…IAAV, LAIA…FIAI, and LAVV…PELL. C173 functions as the Acyl-thioester intermediate in the catalytic mechanism. The Proton donor role is filled by R214.

It belongs to the exosortase/archaeosortase family. Archaeosortase A subfamily.

The protein resides in the cell membrane. In terms of biological role, transpeptidase that recognizes and modifies its substrate by proteolytic cleavage of a sorting signal. Following cleavage, a covalent intermediate is formed via a thioester bond between the archaeosortase and its substrate, which is then transferred and covalently attached to the cell membrane. This sortase recognizes a tripartite structure consisting of a conserved Pro-Gly-Phe (PGF) motif, followed by a transmembrane alpha helix domain and a cluster of basic residues, usually at the C-terminus of target proteins. Confirmed substrates include the cell surface S-layer glycoprotein Csg and HVO_0405. ArtA is required for the C-terminal processing of Csg and for its lipidation and attachment to the archaeal plasma membrane. It is also required for the processing of HVO_0405, which contains an atypical central tripartite structure. In Haloferax volcanii (strain ATCC 29605 / DSM 3757 / JCM 8879 / NBRC 14742 / NCIMB 2012 / VKM B-1768 / DS2) (Halobacterium volcanii), this protein is Archaeosortase A.